A 322-amino-acid chain; its full sequence is Ribosomal RNA small subunit methyltransferase H (322 aa).

S-adenosyl-L-methionine contacts are provided by residues 35–37 (GGY), Asp52, Phe79, Asp100, and Gln107. Positions 254–322 (GATPAGSRHL…TAPKKEGRQG (69 aa)) are disordered. Low complexity predominate over residues 295–309 (SRSATLRVARRTAAA).

The protein belongs to the methyltransferase superfamily. RsmH family.

Its subcellular location is the cytoplasm. It carries out the reaction cytidine(1402) in 16S rRNA + S-adenosyl-L-methionine = N(4)-methylcytidine(1402) in 16S rRNA + S-adenosyl-L-homocysteine + H(+). Functionally, specifically methylates the N4 position of cytidine in position 1402 (C1402) of 16S rRNA. In Rhizorhabdus wittichii (strain DSM 6014 / CCUG 31198 / JCM 15750 / NBRC 105917 / EY 4224 / RW1) (Sphingomonas wittichii), this protein is Ribosomal RNA small subunit methyltransferase H.